A 348-amino-acid polypeptide reads, in one-letter code: MNGTEGPNFYVPFSNKTGVVRSPFEYPQYYLAEPWQFSMLAAYMFLLIVLGFPINFLTLYVTVQHKKLRTPLNYILLNLAVADLFMVFGGFTTTLYTSLHGYFVFGPTGCNLEGFFATLGGEIALWSLVVLAIERYVVVCKPMSNFRFGENHAIMGVGLTWVMALACAAPPLVGWSRYIPEGMQCSCGIDYYTLKPEVNNESFVIYMFVVHFTIPMIVIFFCYGQLVFTVKEAAAQQQESATTQKAEKEVTRMVIIMVIAFLICWVPYASVAFYIFTHQGFNFGPIFMTLPAFFAKAAAIYNPVIYIMMNKQFRTCMITTLCCGKNPLGDDEVSASASKTETSQVAPA.

Met1 carries the post-translational modification N-acetylmethionine. Topologically, residues 1–36 are extracellular; it reads MNGTEGPNFYVPFSNKTGVVRSPFEYPQYYLAEPWQ. 2 N-linked (GlcNAc...) asparagine glycosylation sites follow: Asn2 and Asn15. Residues 37-61 traverse the membrane as a helical segment; it reads FSMLAAYMFLLIVLGFPINFLTLYV. Residues 62 to 73 are Cytoplasmic-facing; the sequence is TVQHKKLRTPLN. Residues 74 to 96 traverse the membrane as a helical segment; the sequence is YILLNLAVADLFMVFGGFTTTLY. Over 97–110 the chain is Extracellular; it reads TSLHGYFVFGPTGC. Cys110 and Cys187 are oxidised to a cystine. The chain crosses the membrane as a helical span at residues 111–133; it reads NLEGFFATLGGEIALWSLVVLAI. The short motif at 134 to 136 is the 'Ionic lock' involved in activated form stabilization element; sequence ERY. Residues 134-152 are Cytoplasmic-facing; the sequence is ERYVVVCKPMSNFRFGENH. A helical transmembrane segment spans residues 153-173; sequence AIMGVGLTWVMALACAAPPLV. Residues 174-202 are Extracellular-facing; the sequence is GWSRYIPEGMQCSCGIDYYTLKPEVNNES. Position 201 (Glu201) interacts with Zn(2+). The helical transmembrane segment at 203–224 threads the bilayer; it reads FVIYMFVVHFTIPMIVIFFCYG. Topologically, residues 225-252 are cytoplasmic; it reads QLVFTVKEAAAQQQESATTQKAEKEVTR. A helical membrane pass occupies residues 253 to 274; sequence MVIIMVIAFLICWVPYASVAFY. Topologically, residues 275–286 are extracellular; sequence IFTHQGFNFGPI. A Zn(2+)-binding site is contributed by Gln279. The chain crosses the membrane as a helical span at residues 287 to 308; it reads FMTLPAFFAKAAAIYNPVIYIM. Residue Lys296 is modified to N6-(retinylidene)lysine. Residues 309 to 348 are Cytoplasmic-facing; it reads MNKQFRTCMITTLCCGKNPLGDDEVSASASKTETSQVAPA. 2 S-palmitoyl cysteine lipidation sites follow: Cys322 and Cys323. The interaction with SAG stretch occupies residues 330–348; the sequence is DDEVSASASKTETSQVAPA. Phosphoserine is present on residues Ser334 and Ser338. Thr340 and Thr342 each carry phosphothreonine. The residue at position 343 (Ser343) is a Phosphoserine.

This sequence belongs to the G-protein coupled receptor 1 family. Opsin subfamily. In terms of assembly, homodimer. Interacts (phosphorylated form) with SAG. Interacts with GNAT1. Interacts with GNAT3. SAG and G-proteins compete for a common binding site. Interacts with GRK1. Interacts with PRCD; the interaction promotes PRCD stability. Forms a complex with ASAP1 and ARF4. Forms a complex with ASAP1, RAB11A, Rabin8/RAB3IP, ARF4 and RAB11FIP3; the complex regulates Golgi-to-cilia rhodopsin/RHO transport in photoreceptors. Post-translationally, phosphorylated on some or all of the serine and threonine residues present in the C-terminal region. In terms of processing, contains one covalently linked retinal chromophore. Upon light absorption, the covalently bound 11-cis-retinal is converted to all-trans-retinal. After hydrolysis of the Schiff base and release of the covalently bound all-trans-retinal, active rhodopsin is regenerated by binding of a fresh molecule of 11-cis-retinal.

The protein localises to the membrane. It localises to the cell projection. The protein resides in the cilium. It is found in the photoreceptor outer segment. Its function is as follows. Photoreceptor required for image-forming vision at low light intensity. Required for photoreceptor cell viability after birth. Light-induced isomerization of 11-cis to all-trans retinal triggers a conformational change that activates signaling via G-proteins. Subsequent receptor phosphorylation mediates displacement of the bound G-protein alpha subunit by the arrestin SAG and terminates signaling. In Pagophilus groenlandicus (Harp seal), this protein is Rhodopsin (RHO).